Consider the following 231-residue polypeptide: Flagellar L-ring protein (231 aa).

The first 18 residues, 1 to 18 (MNRYVSVLALSGIAVLAG), serve as a signal peptide directing secretion. C19 carries the N-palmitoyl cysteine lipid modification. C19 carries the S-diacylglycerol cysteine lipid modification.

The protein belongs to the FlgH family. As to quaternary structure, the basal body constitutes a major portion of the flagellar organelle and consists of four rings (L,P,S, and M) mounted on a central rod.

The protein localises to the cell outer membrane. It is found in the bacterial flagellum basal body. Functionally, assembles around the rod to form the L-ring and probably protects the motor/basal body from shearing forces during rotation. The chain is Flagellar L-ring protein from Pseudomonas fluorescens (strain SBW25).